Reading from the N-terminus, the 485-residue chain is Transcription factor ETV6 (485 aa).

The span at 1-10 (MSETPAQSSI) shows a compositional bias: polar residues. Positions 1-32 (MSETPAQSSIKQERISYTPPESPVASHRSSTP) are disordered. The residue at position 11 (Lys-11) is an N6-acetyllysine; alternate. A Glycyl lysine isopeptide (Lys-Gly) (interchain with G-Cter in SUMO2); alternate cross-link involves residue Lys-11. At Thr-18 the chain carries Phosphothreonine. Phosphoserine is present on Ser-22. One can recognise a PNT domain in the interval 41–125 (ALRMEEDSIH…ELLQHILKQR (85 aa)). A disordered region spans residues 157–210 (NCVQRTPRTPAESVHHNPPTIELLHRPRSPITTNHRPSPDPEQQRPQRSPLDNM). Thr-165 bears the Phosphothreonine mark. Phosphoserine occurs at positions 215, 240, and 251. Lys-284 participates in a covalent cross-link: Glycyl lysine isopeptide (Lys-Gly) (interchain with G-Cter in SUMO2). Lys-298 is modified (N6-acetyllysine; alternate). Residue Lys-298 forms a Glycyl lysine isopeptide (Lys-Gly) (interchain with G-Cter in SUMO2); alternate linkage. Phosphoserine is present on Ser-319. The ETS DNA-binding region spans 335–416 (RLLWDYVYQL…PGQRLLFRFM (82 aa)). Residues Lys-399 and Lys-417 each participate in a glycyl lysine isopeptide (Lys-Gly) (interchain with G-Cter in SUMO2) cross-link. The disordered stretch occupies residues 440–485 (EQTYQEDEPTIASPVGWPRGNLPTGTAGGVMEAGELGVAVKEETRE).

Belongs to the ETS family. In terms of assembly, can form homodimers or heterodimers with TEL2 or FLI1. Interacts with L3MBTL1 and HDAC9.

Its subcellular location is the nucleus. In terms of biological role, transcriptional repressor; binds to the DNA sequence 5'-CCGGAAGT-3'. Plays a role in hematopoiesis and malignant transformation. The sequence is that of Transcription factor ETV6 (Etv6) from Mus musculus (Mouse).